The sequence spans 335 residues: Phosphate acyltransferase (335 aa).

The protein belongs to the PlsX family. In terms of assembly, homodimer. Probably interacts with PlsY.

It localises to the cytoplasm. It catalyses the reaction a fatty acyl-[ACP] + phosphate = an acyl phosphate + holo-[ACP]. Its pathway is lipid metabolism; phospholipid metabolism. In terms of biological role, catalyzes the reversible formation of acyl-phosphate (acyl-PO(4)) from acyl-[acyl-carrier-protein] (acyl-ACP). This enzyme utilizes acyl-ACP as fatty acyl donor, but not acyl-CoA. This chain is Phosphate acyltransferase, found in Desulforudis audaxviator (strain MP104C).